A 316-amino-acid chain; its full sequence is Pyridoxal 5'-phosphate synthase subunit PdxS (316 aa).

D44 contributes to the D-ribose 5-phosphate binding site. The Schiff-base intermediate with D-ribose 5-phosphate role is filled by K101. Position 173 (G173) interacts with D-ribose 5-phosphate. Position 185 (K185) interacts with D-glyceraldehyde 3-phosphate. Residues G234 and G255–S256 each bind D-ribose 5-phosphate.

Belongs to the PdxS/SNZ family. As to quaternary structure, in the presence of PdxT, forms a dodecamer of heterodimers.

It carries out the reaction aldehydo-D-ribose 5-phosphate + D-glyceraldehyde 3-phosphate + L-glutamine = pyridoxal 5'-phosphate + L-glutamate + phosphate + 3 H2O + H(+). The protein operates within cofactor biosynthesis; pyridoxal 5'-phosphate biosynthesis. In terms of biological role, catalyzes the formation of pyridoxal 5'-phosphate from ribose 5-phosphate (RBP), glyceraldehyde 3-phosphate (G3P) and ammonia. The ammonia is provided by the PdxT subunit. Can also use ribulose 5-phosphate and dihydroxyacetone phosphate as substrates, resulting from enzyme-catalyzed isomerization of RBP and G3P, respectively. The polypeptide is Pyridoxal 5'-phosphate synthase subunit PdxS (Sulfurisphaera tokodaii (strain DSM 16993 / JCM 10545 / NBRC 100140 / 7) (Sulfolobus tokodaii)).